Consider the following 147-residue polypeptide: D-aminoacyl-tRNA deacylase (147 aa).

Residues 137-138 (GP) carry the Gly-cisPro motif, important for rejection of L-amino acids motif.

This sequence belongs to the DTD family. As to quaternary structure, homodimer.

The protein localises to the cytoplasm. The catalysed reaction is glycyl-tRNA(Ala) + H2O = tRNA(Ala) + glycine + H(+). The enzyme catalyses a D-aminoacyl-tRNA + H2O = a tRNA + a D-alpha-amino acid + H(+). In terms of biological role, an aminoacyl-tRNA editing enzyme that deacylates mischarged D-aminoacyl-tRNAs. Also deacylates mischarged glycyl-tRNA(Ala), protecting cells against glycine mischarging by AlaRS. Acts via tRNA-based rather than protein-based catalysis; rejects L-amino acids rather than detecting D-amino acids in the active site. By recycling D-aminoacyl-tRNA to D-amino acids and free tRNA molecules, this enzyme counteracts the toxicity associated with the formation of D-aminoacyl-tRNA entities in vivo and helps enforce protein L-homochirality. The chain is D-aminoacyl-tRNA deacylase from Jannaschia sp. (strain CCS1).